Here is a 310-residue protein sequence, read N- to C-terminus: Protein translocase subunit SecF (310 aa).

Transmembrane regions (helical) follow at residues 20–42 (FKKV…IGIY), 140–160 (IEAG…YIWV), 164–184 (WYFG…ALGF), 194–214 (LSTI…SVVI), 246–266 (ILTV…GGEA), and 272–292 (VLVF…SAPI).

This sequence belongs to the SecD/SecF family. SecF subfamily. As to quaternary structure, forms a complex with SecD. Part of the essential Sec protein translocation apparatus which comprises SecA, SecYEG and auxiliary proteins SecDF-YajC and YidC.

The protein localises to the cell inner membrane. Its function is as follows. Part of the Sec protein translocase complex. Interacts with the SecYEG preprotein conducting channel. SecDF uses the proton motive force (PMF) to complete protein translocation after the ATP-dependent function of SecA. The polypeptide is Protein translocase subunit SecF (Rickettsia canadensis (strain McKiel)).